Here is a 348-residue protein sequence, read N- to C-terminus: Holliday junction branch migration complex subunit RuvB (348 aa).

Residues 4–184 (ADRLIAASGR…FGIVQRLEFY (181 aa)) are large ATPase domain (RuvB-L). Residues isoleucine 23, arginine 24, glycine 65, lysine 68, threonine 69, threonine 70, 131–133 (EDF), arginine 174, tyrosine 184, and arginine 221 contribute to the ATP site. Threonine 69 provides a ligand contact to Mg(2+). The tract at residues 185-255 (NDKDLSTIVS…VADMALNLLD (71 aa)) is small ATPAse domain (RuvB-S). Positions 258-348 (ERGFDHSDRR…GGDFSGPGDE (91 aa)) are head domain (RuvB-H). The DNA site is built by arginine 294, arginine 313, and arginine 318.

Belongs to the RuvB family. Homohexamer. Forms an RuvA(8)-RuvB(12)-Holliday junction (HJ) complex. HJ DNA is sandwiched between 2 RuvA tetramers; dsDNA enters through RuvA and exits via RuvB. An RuvB hexamer assembles on each DNA strand where it exits the tetramer. Each RuvB hexamer is contacted by two RuvA subunits (via domain III) on 2 adjacent RuvB subunits; this complex drives branch migration. In the full resolvosome a probable DNA-RuvA(4)-RuvB(12)-RuvC(2) complex forms which resolves the HJ.

The protein resides in the cytoplasm. It catalyses the reaction ATP + H2O = ADP + phosphate + H(+). The RuvA-RuvB-RuvC complex processes Holliday junction (HJ) DNA during genetic recombination and DNA repair, while the RuvA-RuvB complex plays an important role in the rescue of blocked DNA replication forks via replication fork reversal (RFR). RuvA specifically binds to HJ cruciform DNA, conferring on it an open structure. The RuvB hexamer acts as an ATP-dependent pump, pulling dsDNA into and through the RuvAB complex. RuvB forms 2 homohexamers on either side of HJ DNA bound by 1 or 2 RuvA tetramers; 4 subunits per hexamer contact DNA at a time. Coordinated motions by a converter formed by DNA-disengaged RuvB subunits stimulates ATP hydrolysis and nucleotide exchange. Immobilization of the converter enables RuvB to convert the ATP-contained energy into a lever motion, pulling 2 nucleotides of DNA out of the RuvA tetramer per ATP hydrolyzed, thus driving DNA branch migration. The RuvB motors rotate together with the DNA substrate, which together with the progressing nucleotide cycle form the mechanistic basis for DNA recombination by continuous HJ branch migration. Branch migration allows RuvC to scan DNA until it finds its consensus sequence, where it cleaves and resolves cruciform DNA. The protein is Holliday junction branch migration complex subunit RuvB of Pseudomonas putida (strain ATCC 700007 / DSM 6899 / JCM 31910 / BCRC 17059 / LMG 24140 / F1).